The chain runs to 272 residues: 2-dehydro-3-deoxyphosphooctonate aldolase (272 aa).

Belongs to the KdsA family.

It is found in the cytoplasm. The catalysed reaction is D-arabinose 5-phosphate + phosphoenolpyruvate + H2O = 3-deoxy-alpha-D-manno-2-octulosonate-8-phosphate + phosphate. Its pathway is carbohydrate biosynthesis; 3-deoxy-D-manno-octulosonate biosynthesis; 3-deoxy-D-manno-octulosonate from D-ribulose 5-phosphate: step 2/3. The protein operates within bacterial outer membrane biogenesis; lipopolysaccharide biosynthesis. This is 2-dehydro-3-deoxyphosphooctonate aldolase from Pelobacter propionicus (strain DSM 2379 / NBRC 103807 / OttBd1).